The following is a 166-amino-acid chain: Regulator of ribonuclease activity A (166 aa).

This sequence belongs to the RraA family. In terms of assembly, homotrimer. Binds to both RNA-binding sites in the C-terminal region of Rne and to RhlB.

It is found in the cytoplasm. Functionally, globally modulates RNA abundance by binding to RNase E (Rne) and regulating its endonucleolytic activity. Can modulate Rne action in a substrate-dependent manner by altering the composition of the degradosome. Modulates RNA-binding and helicase activities of the degradosome. The protein is Regulator of ribonuclease activity A of Actinobacillus succinogenes (strain ATCC 55618 / DSM 22257 / CCUG 43843 / 130Z).